A 242-amino-acid chain; its full sequence is ATP synthase subunit a (242 aa).

The next 5 helical transmembrane spans lie at 21–41 (LSSI…AIIC), 83–103 (AVTL…FSIV), 117–137 (DATV…FYGI), 175–195 (LYGN…LFFN), and 198–218 (AWGW…SIFV).

This sequence belongs to the ATPase A chain family. F-type ATPases have 2 components, CF(1) - the catalytic core - and CF(0) - the membrane proton channel. CF(1) has five subunits: alpha(3), beta(3), gamma(1), delta(1), epsilon(1). CF(0) has three main subunits: a(1), b(2) and c(9-12). The alpha and beta chains form an alternating ring which encloses part of the gamma chain. CF(1) is attached to CF(0) by a central stalk formed by the gamma and epsilon chains, while a peripheral stalk is formed by the delta and b chains.

The protein localises to the cell membrane. In terms of biological role, key component of the proton channel; it plays a direct role in the translocation of protons across the membrane. The sequence is that of ATP synthase subunit a from Staphylococcus aureus (strain Newman).